The sequence spans 392 residues: Stilbene synthase 2 (392 aa).

55–58 lines the substrate pocket; sequence KFNR. Cysteine 164 is a catalytic residue. Residues leucine 267 and 305-307 each bind substrate; that span reads GGP.

Belongs to the thiolase-like superfamily. Chalcone/stilbene synthases family. In terms of assembly, homodimer.

Its subcellular location is the cytoplasm. It carries out the reaction 4-coumaroyl-CoA + 3 malonyl-CoA + 3 H(+) = trans-resveratrol + 4 CO2 + 4 CoA. Its pathway is phytoalexin biosynthesis; 3,4',5-trihydroxystilbene biosynthesis; 3,4',5-trihydroxystilbene from trans-4-coumarate: step 2/2. Its function is as follows. Mediates resistance to pathogens which are sensitive to stilbenes. The protein is Stilbene synthase 2 of Vitis vinifera (Grape).